A 34-amino-acid chain; its full sequence is MELLTFGWAALLAVFTFSLAMVVWGRNGDGSIGF.

The helical transmembrane segment at 3–23 (LLTFGWAALLAVFTFSLAMVV) threads the bilayer.

The protein belongs to the PetN family. As to quaternary structure, the 4 large subunits of the cytochrome b6-f complex are cytochrome b6, subunit IV (17 kDa polypeptide, PetD), cytochrome f and the Rieske protein, while the 4 small subunits are PetG, PetL, PetM and PetN. The complex functions as a dimer.

It is found in the cellular thylakoid membrane. Its function is as follows. Component of the cytochrome b6-f complex, which mediates electron transfer between photosystem II (PSII) and photosystem I (PSI), cyclic electron flow around PSI, and state transitions. The protein is Cytochrome b6-f complex subunit 8 of Synechococcus elongatus (strain ATCC 33912 / PCC 7942 / FACHB-805) (Anacystis nidulans R2).